The following is a 471-amino-acid chain: F-box only protein 3 (471 aa).

One can recognise an F-box domain in the interval 10 to 56 (PLTLESLPTDPLLLILSFLDYRDLINCCYVSRRLSQLSSHDPLWRRH). The ApaG domain occupies 278–408 (VATTGDITVS…FHMACPTFRV (131 aa)). The segment covering 419-451 (EYEEMEEEEEEEEEEDEDDDSADMDESDEDDEE) has biased composition (acidic residues). The disordered stretch occupies residues 419–455 (EYEEMEEEEEEEEEEDEDDDSADMDESDEDDEEERRR).

As to quaternary structure, part of a SCF (SKP1-cullin-F-box) protein ligase complex SCF(FBXO3) consisting of FBXO3, SKP1, CUL1 and RBX1. Interacts with PML, interaction is direct and takes place either alone or within the SCF complex. In terms of assembly, (Microbial infection) Interacts (via ApaG domain) with Rift valley fever virus NSs helical filament; this interaction forms a filamentous E3 which mediates degradation of TFIIH complex through interaction with GT2H1.

The protein localises to the nucleus. Its pathway is protein modification; protein ubiquitination. Functionally, substrate recognition component of the SCF (SKP1-CUL1-F-box protein)-type E3 ubiquitin ligase complex, SCF(FBXO3), which mediates the ubiquitination and subsequent proteasomal degradation of target proteins. Mediates the ubiquitination of HIPK2 and probably that of EP300, leading to rapid degradation by the proteasome. In the presence of PML, HIPK2 ubiquitination still occurs, but degradation is prevented. PML, HIPK2 and FBXO3 may act synergically to activate p53/TP53-dependent transactivation. The SCF(FBXO3) also acts as a regulator of inflammation by mediating ubiquitination and degradation of FBXL2 in response to lipopolysaccharide (LPS). The SCF(FBXO3) complex specifically recognizes FBXL2 phosphorylated at 'Thr-404' and promotes its ubiquitination. Its function is as follows. (Microbial infection) Associates with the Rift valley fever virus NSs to form a remodeled E3 ligase that triggers efficient proteasomal degradation of targeted proteins. The filamentous E3 ligase targets the TFIIH complex leading to robust inhibition of antiviral immunity and enhances viral pathogenesis. In Homo sapiens (Human), this protein is F-box only protein 3.